Here is a 435-residue protein sequence, read N- to C-terminus: Trigger factor (435 aa).

A disordered region spans residues 125-147 (MEVPEQDTSVSDADVDSELENKR). Residues 164 to 249 (GDTVVIDYEG…IHEVKEKQLP (86 aa)) enclose the PPIase FKBP-type domain.

The protein belongs to the FKBP-type PPIase family. Tig subfamily.

The protein resides in the cytoplasm. The enzyme catalyses [protein]-peptidylproline (omega=180) = [protein]-peptidylproline (omega=0). Functionally, involved in protein export. Acts as a chaperone by maintaining the newly synthesized protein in an open conformation. Functions as a peptidyl-prolyl cis-trans isomerase. This is Trigger factor from Limosilactobacillus fermentum (strain NBRC 3956 / LMG 18251) (Lactobacillus fermentum).